A 494-amino-acid chain; its full sequence is MAEISATSFPSSSSSALVIRSSHNGSLKCQNVAVPKTTSQFQELSLKRSQLVGNAVVTGHVTGSRSCKNQAIRAVLSGDGTALTTDSKEAGLRGKLKKVVLAYSGGLDTSVIVPWLKENYGCEVVCFTADVGQGIKELEGLEQKAKASGASQLVVKDLTEEFVKDFIFPCLRAGAIYERKYLLGTSMARPVIAKAMVDVAAEVGADAVAHGCTGKGNDQVRFELTFFSLNPELKVVAPWREWEIQGREDAIEYAKKHNVPVPVTKKSIYSRDRNLWHLSHEGDLLEDPANEPKKDMYMMSVDPEDAPDQPEYIEIGIESGLPVALNGKALSPATLLAELNTIGGKHGIGRIDMVENRLVGMKSRGVYETPGGTILFAAVQELESLTLDRESIQVKDTLALKYAEMVYAGRWFDPLRESMDAFMEKITETTTGSVTLKLYKGSVSVTGRQSPNSLYRQDISSFEGSEIYNQADAAGFIRLYGLPMKIRAMLKKIS.

Residues 1-73 (MAEISATSFP…SRSCKNQAIR (73 aa)) constitute a chloroplast transit peptide. Ala74 bears the N-acetylalanine mark. ATP contacts are provided by residues 102-110 (AYSGGLDTS) and Ala129. The L-citrulline site is built by Tyr181 and Ser186. Position 211 (Gly211) interacts with ATP. Positions 213, 217, and 218 each coordinate L-aspartate. Asn217 is a binding site for L-citrulline. L-citrulline contacts are provided by Arg221, Ser270, Ser279, Glu355, and Tyr367.

Belongs to the argininosuccinate synthase family. Type 1 subfamily. In terms of assembly, homotetramer.

Its subcellular location is the plastid. It localises to the chloroplast. It carries out the reaction L-citrulline + L-aspartate + ATP = 2-(N(omega)-L-arginino)succinate + AMP + diphosphate + H(+). The protein operates within amino-acid biosynthesis; L-arginine biosynthesis; L-arginine from L-ornithine and carbamoyl phosphate: step 2/3. The chain is Argininosuccinate synthase, chloroplastic from Arabidopsis thaliana (Mouse-ear cress).